The sequence spans 411 residues: Putative ion-transport protein YfeO (411 aa).

11 helical membrane-spanning segments follow: residues Met9 to Ala29, Asp54 to Ile74, Ala99 to Pro119, Ile149 to Ile169, Leu186 to Pro206, Ile223 to Cys243, Val258 to Leu278, Leu296 to Ala316, Gly322 to His342, Val343 to Val363, and Leu386 to Ala406.

The protein belongs to the chloride channel (TC 2.A.49) family.

It localises to the cell membrane. The polypeptide is Putative ion-transport protein YfeO (Salmonella agona (strain SL483)).